A 343-amino-acid chain; its full sequence is Phosphate acyltransferase (343 aa).

It belongs to the PlsX family. As to quaternary structure, homodimer. Probably interacts with PlsY.

It is found in the cytoplasm. The enzyme catalyses a fatty acyl-[ACP] + phosphate = an acyl phosphate + holo-[ACP]. It participates in lipid metabolism; phospholipid metabolism. Functionally, catalyzes the reversible formation of acyl-phosphate (acyl-PO(4)) from acyl-[acyl-carrier-protein] (acyl-ACP). This enzyme utilizes acyl-ACP as fatty acyl donor, but not acyl-CoA. This is Phosphate acyltransferase from Acidovorax sp. (strain JS42).